The sequence spans 310 residues: Ceramide synthase LOH1 (310 aa).

The next 6 membrane-spanning stretches (helical) occupy residues 16 to 36, 85 to 105, 131 to 151, 157 to 177, 216 to 236, and 260 to 280; these read SFPT…FPTI, CIYY…EPWF, FLYM…VFWE, FGVS…SYIC, FVLF…FWIL, and YMFN…WVLI. Residues 76 to 289 enclose the TLC domain; the sequence is RKFKESAWKC…IYRMLVKQVQ (214 aa). 2 positions are modified to phosphoserine: serine 300 and serine 302.

Expressed ubiquitously at high levels. Not observed in pollen.

The protein resides in the endoplasmic reticulum membrane. The enzyme catalyses (4R)-hydroxysphinganine + a fatty acyl-CoA = an N-acyl-(4R)-4-hydroxysphinganine + CoA + H(+). It catalyses the reaction hexacosanoyl-CoA + (4R)-hydroxysphinganine = N-hexacosanoyl-(4R)-hydroxysphinganine + CoA + H(+). It carries out the reaction tetracosanoyl-CoA + (4R)-hydroxysphinganine = N-tetracosanoyl-(4R)-hydroxysphinganine + CoA + H(+). Its pathway is sphingolipid metabolism. Inhibited by the mycotoxin fumonisin B(1), a sphingosine analog mycotoxins produced by pathogenic fungi. Repressed by divalent cation such as magnesium Mg(2+), copper Cu(2+), zinc Zn(2+), manganese Mn(2+), calcium Ca(2+) and cobalt Co(2+). Its function is as follows. Essential for plant growth, promotes cell division in root meristems. Catalyzes the biosynthesis of ceramide sphingolipids with C(16) to C(28) fatty acids, structural membrane lipids involved in membrane trafficking (e.g. early endosomes) and cell polarity (e.g. polar auxin transport related proteins); mostly active with t18:0 and saturated very long saturated fatty acids (C24:0 and C26:0), such as long-chain base (LCB) phytosphingosine (t18:0), lignoceroyl- and hexacosanoyl-CoAs. Mediates resistance to sphinganine-analog mycotoxins (SAMs, e.g. fumonisin B(1)) by restoring the sphingolipid biosynthesis. Could salvage the transport of GPI-anchored proteins from the endoplasmic reticulum to the Golgi apparatus in ceramides-depleted cells after SAM exposure. May prevent precocious cell death by delaying PR1 accumulation during aging. Contributes to hypoxic conditions tolerance (e.g. submergences), especially in the dark, by promoting the formation of very-long-chain (VLC) ceramide species (22:1, 24:1 and 26:1) and of VLC unsaturated ceramides, which are modulating CTR1-mediated ethylene signaling leading to endoplasmic reticulum (ER)-to-nucleus translocation of EIN2 and EIN3. This is Ceramide synthase LOH1 from Arabidopsis thaliana (Mouse-ear cress).